The primary structure comprises 346 residues: Enoyl-[acyl-carrier-protein] reductase, mitochondrial (346 aa).

The N-terminal 22 residues, 1–22, are a transit peptide targeting the mitochondrion; sequence MQKTIRSQALIYRKFGDPLKVL. The Proton donor role is filled by tyrosine 59. Residues asparagine 131, 157-160, 180-182, 249-252, 274-276, and lysine 332 contribute to the NADP(+) site; these read NSGV, RNR, YGGM, and VAV.

It belongs to the zinc-containing alcohol dehydrogenase family. Quinone oxidoreductase subfamily. Homodimer.

The protein localises to the mitochondrion. The catalysed reaction is a 2,3-saturated acyl-[ACP] + NADP(+) = a (2E)-enoyl-[ACP] + NADPH + H(+). In terms of biological role, catalyzes the NADPH-dependent reduction of trans-2-enoyl thioesters in mitochondrial fatty acid synthesis (fatty acid synthesis type II). Fatty acid chain elongation in mitochondria uses acyl carrier protein (ACP) as an acyl group carrier, but the enzyme accepts both ACP and CoA thioesters as substrates in vitro. May provide the octanoyl chain used for lipoic acid biosynthesis, regulating protein lipoylation and mitochondrial respiratory activity. Involved in iron homeostasis; affecting Fe-S cluster assembly and ceramide metabolism. Required for proper morphology and bioenergetic functions of mitochondria. Required for maintenance of neurons. The polypeptide is Enoyl-[acyl-carrier-protein] reductase, mitochondrial (Caenorhabditis elegans).